Here is a 682-residue protein sequence, read N- to C-terminus: Potassium-transporting ATPase ATP-binding subunit (682 aa).

4 helical membrane-spanning segments follow: residues 35 to 55 (VMFVVWLGSVVTTLLAVAMAA), 62 to 82 (TGFTVAISVWLWFTVLFANFA), 219 to 239 (IALTILLLALTIVLLLATVTL), and 254 to 274 (VLVALLVCLIPTTIGGLLSAI). The active-site 4-aspartylphosphate intermediate is aspartate 307. ATP contacts are provided by residues aspartate 344, glutamate 348, 377–384 (FSAQTRMS), and lysine 395. Mg(2+) contacts are provided by aspartate 518 and aspartate 522. Helical transmembrane passes span 577-597 (TFSIANDVAKYFAILPAAFAA), 616-636 (AILSAVIFNALVIVFLIPLAL), and 656-676 (IYGVGGLLVPFLGIKLIDMLL).

Belongs to the cation transport ATPase (P-type) (TC 3.A.3) family. Type IA subfamily. In terms of assembly, the system is composed of three essential subunits: KdpA, KdpB and KdpC.

It localises to the cell inner membrane. It carries out the reaction K(+)(out) + ATP + H2O = K(+)(in) + ADP + phosphate + H(+). Part of the high-affinity ATP-driven potassium transport (or Kdp) system, which catalyzes the hydrolysis of ATP coupled with the electrogenic transport of potassium into the cytoplasm. This subunit is responsible for energy coupling to the transport system and for the release of the potassium ions to the cytoplasm. This Erwinia tasmaniensis (strain DSM 17950 / CFBP 7177 / CIP 109463 / NCPPB 4357 / Et1/99) protein is Potassium-transporting ATPase ATP-binding subunit.